The chain runs to 185 residues: Protein N-terminal glutamine amidohydrolase (185 aa).

Residues Cys14, His62, and Asp78 contribute to the active site.

This sequence belongs to the NTAQ1 family. In terms of assembly, monomer.

The catalysed reaction is N-terminal L-glutaminyl-[protein] + H2O = N-terminal L-glutamyl-[protein] + NH4(+). Functionally, mediates the side-chain deamidation of N-terminal glutamine residues to glutamate, an important step in N-end rule pathway of protein degradation. Conversion of the resulting N-terminal glutamine to glutamate renders the protein susceptible to arginylation, polyubiquitination and degradation as specified by the N-end rule. Does not act on substrates with internal or C-terminal glutamine and does not act on non-glutamine residues in any position. The sequence is that of Protein N-terminal glutamine amidohydrolase from Caenorhabditis briggsae.